Consider the following 398-residue polypeptide: MKVLVLNCGSSSVKYKLLEMPKGDVLAQGGVEKLGLPGSFLKLTMPNGEKVVLEKDMPEHTIAVEFILSVLKDDKYGCIKSYEEIDAVGHRLVHGGEKFSNSVEITPEVIAKVEECIPLAPLHNPANLKGVVAIEKLLPGIRQVGVFDTAFFQTMPEHVYRYALPYDMCNKHGVRRYGFHGTSHRYVSARACEILGLDYDKTRIITAHIGNGASIAAIKNGKALDVSLGMTPVEGLMMGTRSGDVDPGVLTFLMEAEGLQAAGISELINKKSGVLGVSGVSSDLREIEDAIKNGNERATLAMTMYDYRIKKYVGAYAAAMGGVDVLVFTGGVGENQYTTREKVCTDMEFMGIVFDSKVNEGMRGKEMVISKPESKVTVIVVPTDEEYMIASDTMTILK.

A Mg(2+)-binding site is contributed by Asn-7. Lys-14 lines the ATP pocket. Arg-91 is a binding site for substrate. The Proton donor/acceptor role is filled by Asp-148. Residues 208 to 212, 283 to 285, and 331 to 335 contribute to the ATP site; these read HIGNG, DLR, and GVGEN. Glu-385 provides a ligand contact to Mg(2+).

It belongs to the acetokinase family. In terms of assembly, homodimer. Mg(2+) is required as a cofactor. Requires Mn(2+) as cofactor.

It localises to the cytoplasm. It catalyses the reaction acetate + ATP = acetyl phosphate + ADP. Its pathway is metabolic intermediate biosynthesis; acetyl-CoA biosynthesis; acetyl-CoA from acetate: step 1/2. Its function is as follows. Catalyzes the formation of acetyl phosphate from acetate and ATP. Can also catalyze the reverse reaction. The sequence is that of Acetate kinase from Porphyromonas gingivalis (strain ATCC 33277 / DSM 20709 / CIP 103683 / JCM 12257 / NCTC 11834 / 2561).